A 26-amino-acid polypeptide reads, in one-letter code: Fumarylacetoacetate hydrolase domain-containing protein 2A (26 aa).

The protein belongs to the FAH family. Ca(2+) is required as a cofactor. Mg(2+) serves as cofactor.

Functionally, may have hydrolase activity. The polypeptide is Fumarylacetoacetate hydrolase domain-containing protein 2A (Mesocricetus auratus (Golden hamster)).